The following is a 296-amino-acid chain: Decaprenyl diphosphate synthase (296 aa).

The interval 1–24 (MARDARKRTSSNFPQLPPAPDDYP) is disordered. The active site involves aspartate 76. Aspartate 76 is a Mg(2+) binding site. Substrate-binding positions include 76–80 (DGNGR), tryptophan 81, arginine 89, histidine 93, 121–124 (STEN), tryptophan 125, arginine 127, arginine 168, arginine 244, and 250–252 (RSS). The Proton acceptor role is filled by asparagine 124. Glutamate 263 provides a ligand contact to Mg(2+). 292-294 (RFG) serves as a coordination point for substrate.

The protein belongs to the UPP synthase family. Homodimer. It depends on Mg(2+) as a cofactor. Mn(2+) is required as a cofactor.

The protein localises to the cell membrane. The enzyme catalyses (2Z,6E)-farnesyl diphosphate + 7 isopentenyl diphosphate = (2Z,6Z,10Z,14Z,18Z,22Z,26Z,30Z,34E)-decaprenyl diphosphate + 7 diphosphate. The catalysed reaction is n isopentenyl diphosphate + (2E,6E)-farnesyl diphosphate = a di-trans,poly-cis-polyprenyl diphosphate + n diphosphate. With respect to regulation, activated by dithiothreitol and inhibited by EDTA. Its function is as follows. Catalyzes the sequential condensation of isopentenyl diphosphate (IPP) in the cis configuration with (2Z,6E)-farnesyl diphosphate (Z-FPP or EZ-FPP) generating the 50 carbon product trans,polycis-decaprenyl diphosphate. When (2E,6E)-farnesyl diphosphate (E-FPP or EE-FPP) is used in vitro, both primary products decaprenyl diphosphate and (2E,6E,10E)-geranylgeranyl diphosphate (EEE-GGPP) are synthesized. M.tuberculosis does not synthesize (2E,6E,10Z)-geranylgeranyl diphosphate (EEZ-GGPP) and heptaprenyl diphosphate. Can also accept many different allylic substrates, including E-geranyl diphosphate (E-GPP), neryl diphosphate (NPP), and all-trans-geranyl-geranyl diphosphate. This Mycobacterium tuberculosis (strain ATCC 25618 / H37Rv) protein is Decaprenyl diphosphate synthase (uppS).